Here is a 130-residue protein sequence, read N- to C-terminus: Secreted RxLR effector protein 68 (130 aa).

Residues 1–29 form the signal peptide; that stretch reads MRCVCASIRRTRIIEFLMFFALSSSTASC. An N-linked (GlcNAc...) asparagine glycan is attached at N36. Positions 45–48 match the RxLR motif; it reads RWLR.

This sequence belongs to the RxLR effector family.

The protein resides in the secreted. It is found in the host cytoplasm. Its subcellular location is the host nucleus. Effector that acts as a broad suppressor of cell death to interrupt plant immunity. Inhibits cell death induced by cell death-inducing proteins, including the PAMP elicitor INF1 from P.infestans. This is Secreted RxLR effector protein 68 from Plasmopara viticola (Downy mildew of grapevine).